A 156-amino-acid polypeptide reads, in one-letter code: ATP synthase subunit b (156 aa).

The chain crosses the membrane as a helical span at residues Ile-5–Pro-27.

The protein belongs to the ATPase B chain family. F-type ATPases have 2 components, F(1) - the catalytic core - and F(0) - the membrane proton channel. F(1) has five subunits: alpha(3), beta(3), gamma(1), delta(1), epsilon(1). F(0) has three main subunits: a(1), b(2) and c(10-14). The alpha and beta chains form an alternating ring which encloses part of the gamma chain. F(1) is attached to F(0) by a central stalk formed by the gamma and epsilon chains, while a peripheral stalk is formed by the delta and b chains.

It is found in the cell inner membrane. Its function is as follows. F(1)F(0) ATP synthase produces ATP from ADP in the presence of a proton or sodium gradient. F-type ATPases consist of two structural domains, F(1) containing the extramembraneous catalytic core and F(0) containing the membrane proton channel, linked together by a central stalk and a peripheral stalk. During catalysis, ATP synthesis in the catalytic domain of F(1) is coupled via a rotary mechanism of the central stalk subunits to proton translocation. Functionally, component of the F(0) channel, it forms part of the peripheral stalk, linking F(1) to F(0). The chain is ATP synthase subunit b from Francisella tularensis subsp. tularensis (strain SCHU S4 / Schu 4).